The chain runs to 86 residues: Small ribosomal subunit protein bS16 (86 aa).

It belongs to the bacterial ribosomal protein bS16 family.

The protein is Small ribosomal subunit protein bS16 of Carboxydothermus hydrogenoformans (strain ATCC BAA-161 / DSM 6008 / Z-2901).